The following is a 360-amino-acid chain: Peptide chain release factor 1 (360 aa).

Q237 carries the post-translational modification N5-methylglutamine.

The protein belongs to the prokaryotic/mitochondrial release factor family. Methylated by PrmC. Methylation increases the termination efficiency of RF1.

Its subcellular location is the cytoplasm. Functionally, peptide chain release factor 1 directs the termination of translation in response to the peptide chain termination codons UAG and UAA. This chain is Peptide chain release factor 1, found in Cellvibrio japonicus (strain Ueda107) (Pseudomonas fluorescens subsp. cellulosa).